Reading from the N-terminus, the 876-residue chain is Alanine--tRNA ligase (876 aa).

Residues His560, His564, Cys662, and His666 each contribute to the Zn(2+) site.

Belongs to the class-II aminoacyl-tRNA synthetase family. Zn(2+) is required as a cofactor.

The protein resides in the cytoplasm. The catalysed reaction is tRNA(Ala) + L-alanine + ATP = L-alanyl-tRNA(Ala) + AMP + diphosphate. In terms of biological role, catalyzes the attachment of alanine to tRNA(Ala) in a two-step reaction: alanine is first activated by ATP to form Ala-AMP and then transferred to the acceptor end of tRNA(Ala). Also edits incorrectly charged Ser-tRNA(Ala) and Gly-tRNA(Ala) via its editing domain. This is Alanine--tRNA ligase from Synechococcus elongatus (strain ATCC 33912 / PCC 7942 / FACHB-805) (Anacystis nidulans R2).